A 263-amino-acid polypeptide reads, in one-letter code: UPF0246 protein Mmar10_0828 (263 aa).

The protein belongs to the UPF0246 family.

The protein is UPF0246 protein Mmar10_0828 of Maricaulis maris (strain MCS10) (Caulobacter maris).